Consider the following 378-residue polypeptide: Lipid-A-disaccharide synthase (378 aa).

Belongs to the LpxB family.

The enzyme catalyses a lipid X + a UDP-2-N,3-O-bis[(3R)-3-hydroxyacyl]-alpha-D-glucosamine = a lipid A disaccharide + UDP + H(+). The protein operates within bacterial outer membrane biogenesis; LPS lipid A biosynthesis. Condensation of UDP-2,3-diacylglucosamine and 2,3-diacylglucosamine-1-phosphate to form lipid A disaccharide, a precursor of lipid A, a phosphorylated glycolipid that anchors the lipopolysaccharide to the outer membrane of the cell. The protein is Lipid-A-disaccharide synthase of Methylobacillus flagellatus (strain ATCC 51484 / DSM 6875 / VKM B-1610 / KT).